The sequence spans 216 residues: Dephospho-CoA kinase (216 aa).

In terms of domain architecture, DPCK spans 18–216 (IIGVIGPPCS…SELASVLQSK (199 aa)). 26–31 (CSGKST) contributes to the ATP binding site.

This sequence belongs to the CoaE family.

It is found in the cytoplasm. The catalysed reaction is 3'-dephospho-CoA + ATP = ADP + CoA + H(+). It functions in the pathway cofactor biosynthesis; coenzyme A biosynthesis; CoA from (R)-pantothenate: step 5/5. In terms of biological role, catalyzes the phosphorylation of the 3'-hydroxyl group of dephosphocoenzyme A to form coenzyme A. This chain is Dephospho-CoA kinase, found in Rhodopirellula baltica (strain DSM 10527 / NCIMB 13988 / SH1).